The sequence spans 292 residues: Undecaprenyl-diphosphatase (292 aa).

5 helical membrane passes run 87–107 (MGWY…LFEE), 113–133 (FRDL…LGMV), 190–210 (AFLL…KDIG), 219–239 (ATIV…AWFM), and 250–270 (FVYY…FGVL).

This sequence belongs to the UppP family.

The protein localises to the cell membrane. It carries out the reaction di-trans,octa-cis-undecaprenyl diphosphate + H2O = di-trans,octa-cis-undecaprenyl phosphate + phosphate + H(+). Its function is as follows. Catalyzes the dephosphorylation of undecaprenyl diphosphate (UPP). Confers resistance to bacitracin. The protein is Undecaprenyl-diphosphatase of Thermobifida fusca (strain YX).